Reading from the N-terminus, the 215-residue chain is Octanoyltransferase (215 aa).

The BPL/LPL catalytic domain maps to 35–210; it reads PDTPDQLWVV…HCLEAIVEYG (176 aa). Substrate-binding positions include 74-81, 141-143, and 154-156; these read RGGQVTYH, SVG, and GLA. The active-site Acyl-thioester intermediate is the C172.

The protein belongs to the LipB family.

The protein resides in the cytoplasm. It carries out the reaction octanoyl-[ACP] + L-lysyl-[protein] = N(6)-octanoyl-L-lysyl-[protein] + holo-[ACP] + H(+). Its pathway is protein modification; protein lipoylation via endogenous pathway; protein N(6)-(lipoyl)lysine from octanoyl-[acyl-carrier-protein]: step 1/2. Its function is as follows. Catalyzes the transfer of endogenously produced octanoic acid from octanoyl-acyl-carrier-protein onto the lipoyl domains of lipoate-dependent enzymes. Lipoyl-ACP can also act as a substrate although octanoyl-ACP is likely to be the physiological substrate. The protein is Octanoyltransferase of Alkalilimnicola ehrlichii (strain ATCC BAA-1101 / DSM 17681 / MLHE-1).